A 432-amino-acid polypeptide reads, in one-letter code: Enolase (432 aa).

Q167 lines the (2R)-2-phosphoglycerate pocket. Residue E209 is the Proton donor of the active site. D246, E290, and D317 together coordinate Mg(2+). (2R)-2-phosphoglycerate-binding residues include K342, R371, S372, and K393. Residue K342 is the Proton acceptor of the active site.

This sequence belongs to the enolase family. As to quaternary structure, component of the RNA degradosome, a multiprotein complex involved in RNA processing and mRNA degradation. It depends on Mg(2+) as a cofactor.

It is found in the cytoplasm. Its subcellular location is the secreted. The protein localises to the cell surface. The catalysed reaction is (2R)-2-phosphoglycerate = phosphoenolpyruvate + H2O. It functions in the pathway carbohydrate degradation; glycolysis; pyruvate from D-glyceraldehyde 3-phosphate: step 4/5. Catalyzes the reversible conversion of 2-phosphoglycerate (2-PG) into phosphoenolpyruvate (PEP). It is essential for the degradation of carbohydrates via glycolysis. This is Enolase from Escherichia coli O139:H28 (strain E24377A / ETEC).